The chain runs to 204 residues: Leucyl/phenylalanyl-tRNA--protein transferase (204 aa).

The protein belongs to the L/F-transferase family.

The protein localises to the cytoplasm. The catalysed reaction is N-terminal L-lysyl-[protein] + L-leucyl-tRNA(Leu) = N-terminal L-leucyl-L-lysyl-[protein] + tRNA(Leu) + H(+). It catalyses the reaction N-terminal L-arginyl-[protein] + L-leucyl-tRNA(Leu) = N-terminal L-leucyl-L-arginyl-[protein] + tRNA(Leu) + H(+). It carries out the reaction L-phenylalanyl-tRNA(Phe) + an N-terminal L-alpha-aminoacyl-[protein] = an N-terminal L-phenylalanyl-L-alpha-aminoacyl-[protein] + tRNA(Phe). Its function is as follows. Functions in the N-end rule pathway of protein degradation where it conjugates Leu, Phe and, less efficiently, Met from aminoacyl-tRNAs to the N-termini of proteins containing an N-terminal arginine or lysine. The protein is Leucyl/phenylalanyl-tRNA--protein transferase of Agrobacterium fabrum (strain C58 / ATCC 33970) (Agrobacterium tumefaciens (strain C58)).